Consider the following 700-residue polypeptide: Elongation factor G (700 aa).

One can recognise a tr-type G domain in the interval 8-290; sequence ERYRNIGISA…AVVEFMPSPV (283 aa). GTP contacts are provided by residues 17-24, 88-92, and 142-145; these read AHIDAGKT, DTPGH, and NKMD.

The protein belongs to the TRAFAC class translation factor GTPase superfamily. Classic translation factor GTPase family. EF-G/EF-2 subfamily.

Its subcellular location is the cytoplasm. In terms of biological role, catalyzes the GTP-dependent ribosomal translocation step during translation elongation. During this step, the ribosome changes from the pre-translocational (PRE) to the post-translocational (POST) state as the newly formed A-site-bound peptidyl-tRNA and P-site-bound deacylated tRNA move to the P and E sites, respectively. Catalyzes the coordinated movement of the two tRNA molecules, the mRNA and conformational changes in the ribosome. In Albidiferax ferrireducens (strain ATCC BAA-621 / DSM 15236 / T118) (Rhodoferax ferrireducens), this protein is Elongation factor G.